Here is a 134-residue protein sequence, read N- to C-terminus: Ribonuclease P protein component 2 (134 aa).

Belongs to the eukaryotic/archaeal RNase P protein component 2 family. Consists of a catalytic RNA component and at least 4-5 protein subunits. Forms a subcomplex with Rnp3 which stimulates the catalytic RNA.

The protein resides in the cytoplasm. The enzyme catalyses Endonucleolytic cleavage of RNA, removing 5'-extranucleotides from tRNA precursor.. Functionally, part of ribonuclease P, a protein complex that generates mature tRNA molecules by cleaving their 5'-ends. The protein is Ribonuclease P protein component 2 of Methanocaldococcus jannaschii (strain ATCC 43067 / DSM 2661 / JAL-1 / JCM 10045 / NBRC 100440) (Methanococcus jannaschii).